The following is a 396-amino-acid chain: Metacaspase-1 (396 aa).

Gly residues predominate over residues 1–20 (MSGYPGQGYQGQGYGQGYGQ). The segment at 1–86 (MSGYPGQGYQ…PQGMQQFGHG (86 aa)) is disordered. Low complexity predominate over residues 47 to 62 (HYQYGPPQGGYQYPPQ). Residues 72-81 (QAHQPPQGMQ) show a composition bias toward polar residues. Catalysis depends on residues His-186 and Cys-242.

This sequence belongs to the peptidase C14B family.

Functionally, involved in cell death (apoptosis). This is Metacaspase-1 (MCA1) from Pyricularia oryzae (strain 70-15 / ATCC MYA-4617 / FGSC 8958) (Rice blast fungus).